The primary structure comprises 332 residues: Succinylglutamate desuccinylase (332 aa).

Histidine 59, glutamate 62, and histidine 151 together coordinate Zn(2+). Glutamate 215 is an active-site residue.

This sequence belongs to the AspA/AstE family. Succinylglutamate desuccinylase subfamily. The cofactor is Zn(2+).

It catalyses the reaction N-succinyl-L-glutamate + H2O = L-glutamate + succinate. It functions in the pathway amino-acid degradation; L-arginine degradation via AST pathway; L-glutamate and succinate from L-arginine: step 5/5. Functionally, transforms N(2)-succinylglutamate into succinate and glutamate. The protein is Succinylglutamate desuccinylase of Pseudomonas aeruginosa (strain UCBPP-PA14).